Here is a 490-residue protein sequence, read N- to C-terminus: Betaine aldehyde dehydrogenase (490 aa).

Isoleucine 27 and aspartate 93 together coordinate K(+). 150 to 152 (GAW) is an NAD(+) binding site. The active-site Charge relay system is the lysine 162. 176 to 179 (KPSE) contacts NAD(+). Valine 180 is a K(+) binding site. 230–233 (GTDT) provides a ligand contact to NAD(+). Leucine 246 contributes to the K(+) binding site. Glutamate 252 (proton acceptor) is an active-site residue. Residues glycine 254, cysteine 286, and glutamate 387 each contribute to the NAD(+) site. The active-site Nucleophile is cysteine 286. The residue at position 286 (cysteine 286) is a Cysteine sulfenic acid (-SOH). K(+)-binding residues include lysine 457 and glycine 460. The active-site Charge relay system is the glutamate 464.

This sequence belongs to the aldehyde dehydrogenase family. As to quaternary structure, dimer of dimers. The cofactor is K(+).

The catalysed reaction is betaine aldehyde + NAD(+) + H2O = glycine betaine + NADH + 2 H(+). It functions in the pathway amine and polyamine biosynthesis; betaine biosynthesis via choline pathway; betaine from betaine aldehyde: step 1/1. Involved in the biosynthesis of the osmoprotectant glycine betaine. Catalyzes the irreversible oxidation of betaine aldehyde to the corresponding acid. This chain is Betaine aldehyde dehydrogenase, found in Pseudomonas fluorescens (strain ATCC BAA-477 / NRRL B-23932 / Pf-5).